Consider the following 888-residue polypeptide: Interference hedgehog (888 aa).

Positions 1–24 are cleaved as a signal peptide; the sequence is MSLTRFSLCLLLTLLLAAIPVYLA. The Extracellular portion of the chain corresponds to 25 to 688; it reads SPDPGVRILR…SHNETFNLNP (664 aa). Ig-like C2-type domains are found at residues 28-123, 134-215, 234-321, and 327-414; these read PGVR…ARLE, EGFK…VRLA, PHLL…SIQL, and PRIV…LQVN. Intrachain disulfides connect Cys-51-Cys-106, Cys-155-Cys-203, and Cys-257-Cys-305. Residues Asn-80, Asn-185, Asn-192, Asn-281, Asn-336, Asn-365, Asn-369, and Asn-455 are each glycosylated (N-linked (GlcNAc...) asparagine). Residues Cys-348 and Cys-396 are joined by a disulfide bond. 2 consecutive Fibronectin type-III domains span residues 450 to 557 and 565 to 660; these read PPSA…LQRG and VPSL…TQRP. Residues Arg-486 and Lys-493 each contribute to the heparin site. N-linked (GlcNAc...) asparagine glycosylation is present at Asn-516. Position 531 (Arg-531) interacts with heparin. N-linked (GlcNAc...) asparagine glycosylation is present at Asn-547. Polar residues predominate over residues 655 to 667; that stretch reads GRTQRPRVSTTTE. Positions 655–679 are disordered; the sequence is GRTQRPRVSTTTEPAVHAMDTTTPS. An N-linked (GlcNAc...) asparagine glycan is attached at Asn-681. A helical transmembrane segment spans residues 689-709; that stretch reads LLTGTIGGGALLVLLVVSACL. At 710–888 the chain is on the cytoplasmic side; sequence CLCRRRSSRG…SSGSLNSVGV (179 aa). Disordered regions lie at residues 759–789, 812–864, and 869–888; these read AQQQQQQQQQQQQQQQQQHEEKDTQDNDMSY, SSSL…PGRV, and ARLSSRSENLSSGSLNSVGV. The segment covering 760–775 has biased composition (low complexity); sequence QQQQQQQQQQQQQQQQ. Residues 843–859 show a composition bias toward polar residues; the sequence is QPTDGSTADSPRLQASN. Positions 872–888 are enriched in low complexity; it reads SSRSENLSSGSLNSVGV.

The protein belongs to the immunoglobulin superfamily. IHOG family. As to quaternary structure, homodimer. Heterotetramer; 2 iHog chains bind 2 hh chains when facilitated by heparin, heparin is required to promote high-affinity interactions between hh and iHog.

Its subcellular location is the membrane. Functionally, mediates response to the active Hedgehog (Hh) protein signal in embryos, functioning upstream or at the level of patched (ptc). The sequence is that of Interference hedgehog from Drosophila grimshawi (Hawaiian fruit fly).